A 511-amino-acid polypeptide reads, in one-letter code: MSAAVVRRLALNSPRHTIISRRAVHLQPLCGQQYVKSKLRNWTCLTFLGESVTAGSSIPLRKDAKPFKLAVKDNIATADFPTQCASQILSSHPSPFEATVVRQLRERGASIVGKTNMDEFGMGSHSTNSIHGAVRNPLAEDDDVSAGGSSGGSAVAVRLGDADVALGTDTGGSIRLPAAYTGTVGYKPSYGMISRFGVVPYANSLDTVGFLASEVKPIHDLVFKTGLYQEHDSSDPTSLPIASRKRCAETTPSTLPDLSKLNIGIPLEYNIEELDPSIRDAWVAAASALEAQGATLVPISLPSTTEALCAYYVLAPAEASSNLAKYDGVRYGKRGEGSDAVGETLYSDTRGAGFGDEVKRRILLGTYSLSSEAMDNYFIQAQKVRRMVQQDFDRVFRLDNPLYEPAQFDLSDMAEATGMEDKRGPLQVDFILCPTAPTFPPRLDEIKEQSSVDVYMNDVFTVPASLAGLPAVSVPAKVEGSRFPAGLQVIGQYWDDQRVLLLAEKLKEAVA.

Catalysis depends on charge relay system residues Lys-72 and Ser-149. Ser-173 acts as the Acyl-ester intermediate in catalysis.

The protein belongs to the amidase family. GatA subfamily. As to quaternary structure, subunit of the heterotrimeric GatCAB amidotransferase (AdT) complex, composed of A, B and C subunits.

It is found in the mitochondrion. It catalyses the reaction L-glutamyl-tRNA(Gln) + L-glutamine + ATP + H2O = L-glutaminyl-tRNA(Gln) + L-glutamate + ADP + phosphate + H(+). Its function is as follows. Allows the formation of correctly charged Gln-tRNA(Gln) through the transamidation of misacylated Glu-tRNA(Gln) in the mitochondria. The reaction takes place in the presence of glutamine and ATP through an activated gamma-phospho-Glu-tRNA(Gln). The protein is Glutamyl-tRNA(Gln) amidotransferase subunit A, mitochondrial of Fusarium vanettenii (strain ATCC MYA-4622 / CBS 123669 / FGSC 9596 / NRRL 45880 / 77-13-4) (Fusarium solani subsp. pisi).